Consider the following 409-residue polypeptide: Elongation factor Tu, plastid (409 aa).

The 205-residue stretch at lysine 10–valine 214 folds into the tr-type G domain. The tract at residues glycine 19–threonine 26 is G1. Glycine 19 to threonine 26 contributes to the GTP binding site. Threonine 26 contributes to the Mg(2+) binding site. Residues glycine 60 to asparagine 64 form a G2 region. Positions aspartate 81 to glycine 84 are G3. Residues aspartate 81–histidine 85 and asparagine 136–aspartate 139 each bind GTP. Positions asparagine 136–aspartate 139 are G4. The G5 stretch occupies residues serine 174–leucine 176.

Belongs to the TRAFAC class translation factor GTPase superfamily. Classic translation factor GTPase family. EF-Tu/EF-1A subfamily.

The protein localises to the plastid. The enzyme catalyses GTP + H2O = GDP + phosphate + H(+). Its function is as follows. GTP hydrolase that promotes the GTP-dependent binding of aminoacyl-tRNA to the A-site of ribosomes during protein biosynthesis. The sequence is that of Elongation factor Tu, plastid (tufA) from Helicosporidium sp. subsp. Simulium jonesii (Green alga).